Consider the following 295-residue polypeptide: Indole-3-glycerol phosphate synthase (295 aa).

Belongs to the TrpC family.

The enzyme catalyses 1-(2-carboxyphenylamino)-1-deoxy-D-ribulose 5-phosphate + H(+) = (1S,2R)-1-C-(indol-3-yl)glycerol 3-phosphate + CO2 + H2O. It functions in the pathway amino-acid biosynthesis; L-tryptophan biosynthesis; L-tryptophan from chorismate: step 4/5. The sequence is that of Indole-3-glycerol phosphate synthase from Prochlorococcus marinus (strain AS9601).